Reading from the N-terminus, the 145-residue chain is Small ribosomal subunit protein uS9 (145 aa).

A compositionally biased stretch (polar residues) spans 1–13; it reads MATDQHSNKSNVS. The interval 1–24 is disordered; sequence MATDQHSNKSNVSAARKPLSPSPT.

It belongs to the universal ribosomal protein uS9 family.

The protein resides in the cytoplasm. This is Small ribosomal subunit protein uS9 (RPS16) from Lupinus polyphyllus (Large-leaved lupine).